The chain runs to 1385 residues: DNA-directed RNA polymerase subunit beta' (1385 aa).

Zn(2+) contacts are provided by C72, C74, C87, and C90. Residues D463, D465, and D467 each contribute to the Mg(2+) site. The Zn(2+) site is built by C813, C887, C894, and C897.

The protein belongs to the RNA polymerase beta' chain family. In terms of assembly, the RNAP catalytic core consists of 2 alpha, 1 beta, 1 beta' and 1 omega subunit. When a sigma factor is associated with the core the holoenzyme is formed, which can initiate transcription. Requires Mg(2+) as cofactor. Zn(2+) serves as cofactor.

The enzyme catalyses RNA(n) + a ribonucleoside 5'-triphosphate = RNA(n+1) + diphosphate. In terms of biological role, DNA-dependent RNA polymerase catalyzes the transcription of DNA into RNA using the four ribonucleoside triphosphates as substrates. The protein is DNA-directed RNA polymerase subunit beta' of Trichlorobacter lovleyi (strain ATCC BAA-1151 / DSM 17278 / SZ) (Geobacter lovleyi).